The sequence spans 75 residues: Large ribosomal subunit protein eL14 (75 aa).

It belongs to the eukaryotic ribosomal protein eL14 family.

This chain is Large ribosomal subunit protein eL14, found in Methanothermobacter thermautotrophicus (strain ATCC 29096 / DSM 1053 / JCM 10044 / NBRC 100330 / Delta H) (Methanobacterium thermoautotrophicum).